A 419-amino-acid polypeptide reads, in one-letter code: Acetylornithine aminotransferase (419 aa).

Pyridoxal 5'-phosphate-binding positions include 116-117 (GA) and F149. Position 152 (R152) interacts with N(2)-acetyl-L-ornithine. 240-243 (DEVQ) provides a ligand contact to pyridoxal 5'-phosphate. At K269 the chain carries N6-(pyridoxal phosphate)lysine. S296 contributes to the N(2)-acetyl-L-ornithine binding site. T297 serves as a coordination point for pyridoxal 5'-phosphate.

It belongs to the class-III pyridoxal-phosphate-dependent aminotransferase family. ArgD subfamily. As to quaternary structure, homodimer. Pyridoxal 5'-phosphate serves as cofactor.

It localises to the cytoplasm. It catalyses the reaction N(2)-acetyl-L-ornithine + 2-oxoglutarate = N-acetyl-L-glutamate 5-semialdehyde + L-glutamate. The protein operates within amino-acid biosynthesis; L-arginine biosynthesis; N(2)-acetyl-L-ornithine from L-glutamate: step 4/4. The polypeptide is Acetylornithine aminotransferase (Prochlorococcus marinus (strain SARG / CCMP1375 / SS120)).